A 232-amino-acid chain; its full sequence is MDMRRASMCMMLICVSLVLLSGFGQFVICSEEKGTYNDNVVKMKLGGFSDSKNDWNGGKEIDDIALFAVQEHNRRENAVLELARVLKATEQVVAGKLYRLTLEVIEAGEKKIYEAKVWVKPWMNFKQLQEFKNIIPSFTISDLGFKPDGNGFDWRSVSTNNPEVQEAAKHAMKSLQQKSNSLFPYKLIDIILARAKVVEERVKFELLLKLERGNKLEKFMVEVMKDQTGKYE.

A signal peptide spans 1–29 (MDMRRASMCMMLICVSLVLLSGFGQFVIC). 2 Cystatin domains span residues 46 to 135 (GGFS…KNII) and 152 to 214 (FDWR…ERGN). The Secondary area of contact motif lies at 91–95 (QVVAG). Ser181 is modified (phosphoserine).

This sequence belongs to the cystatin family. Phytocystatin subfamily.

It is found in the secreted. Specific inhibitor of cysteine proteinases. Probably involved in the regulation of endogenous processes and in defense against pests and pathogens. This is Cysteine proteinase inhibitor 7 (CYS7) from Arabidopsis thaliana (Mouse-ear cress).